A 460-amino-acid polypeptide reads, in one-letter code: UDP-N-acetylmuramate--L-alanine ligase (460 aa).

118–124 lines the ATP pocket; the sequence is GAHGKTT.

Belongs to the MurCDEF family.

It localises to the cytoplasm. It catalyses the reaction UDP-N-acetyl-alpha-D-muramate + L-alanine + ATP = UDP-N-acetyl-alpha-D-muramoyl-L-alanine + ADP + phosphate + H(+). Its pathway is cell wall biogenesis; peptidoglycan biosynthesis. Cell wall formation. This Clostridium botulinum (strain Eklund 17B / Type B) protein is UDP-N-acetylmuramate--L-alanine ligase.